We begin with the raw amino-acid sequence, 450 residues long: Divalent metal cation transporter MntH (450 aa).

A run of 11 helical transmembrane segments spans residues 34–54 (LSFLGPGLLVAVGYMDPGNWI), 61–81 (AQYGYTLLFVILISSLSAMLL), 108–128 (IAIIFWIIAELAIIATDIAEV), 141–161 (IPLIVGALITVLDVFLLLFIM), 170–190 (AIVGTLIFTVLFIFIFEVYIS), 212–232 (GILYIALGIIGATIMPHNLYL), 263–283 (IQLSIAFVVNCLLLVLGASLF), 305–325 (PVLGATMGAIMSTLFAVALLA), 361–381 (SLAVIPVIVCLSIFKGNAAKI), 383–403 (QLLVFSQVFLSIALPFCLIPL), and 422–442 (VNIISWTLIIILSILNVYLIV).

The protein belongs to the NRAMP family.

The protein localises to the cell membrane. Its function is as follows. H(+)-stimulated, divalent metal cation uptake system. This chain is Divalent metal cation transporter MntH, found in Staphylococcus aureus (strain bovine RF122 / ET3-1).